The sequence spans 190 residues: Crossover junction endodeoxyribonuclease RuvC (190 aa).

Active-site residues include D7, E67, and D140. Positions 7, 67, and 140 each coordinate Mg(2+).

Belongs to the RuvC family. In terms of assembly, homodimer which binds Holliday junction (HJ) DNA. The HJ becomes 2-fold symmetrical on binding to RuvC with unstacked arms; it has a different conformation from HJ DNA in complex with RuvA. In the full resolvosome a probable DNA-RuvA(4)-RuvB(12)-RuvC(2) complex forms which resolves the HJ. Mg(2+) serves as cofactor.

It is found in the cytoplasm. It carries out the reaction Endonucleolytic cleavage at a junction such as a reciprocal single-stranded crossover between two homologous DNA duplexes (Holliday junction).. In terms of biological role, the RuvA-RuvB-RuvC complex processes Holliday junction (HJ) DNA during genetic recombination and DNA repair. Endonuclease that resolves HJ intermediates. Cleaves cruciform DNA by making single-stranded nicks across the HJ at symmetrical positions within the homologous arms, yielding a 5'-phosphate and a 3'-hydroxyl group; requires a central core of homology in the junction. The consensus cleavage sequence is 5'-(A/T)TT(C/G)-3'. Cleavage occurs on the 3'-side of the TT dinucleotide at the point of strand exchange. HJ branch migration catalyzed by RuvA-RuvB allows RuvC to scan DNA until it finds its consensus sequence, where it cleaves and resolves the cruciform DNA. This is Crossover junction endodeoxyribonuclease RuvC from Fusobacterium nucleatum subsp. nucleatum (strain ATCC 25586 / DSM 15643 / BCRC 10681 / CIP 101130 / JCM 8532 / KCTC 2640 / LMG 13131 / VPI 4355).